A 182-amino-acid chain; its full sequence is Adenylate kinase (182 aa).

Residue 12 to 17 (GAGKGT) coordinates ATP. Residues 32–61 (STGDLLRAEVKAGSELGKEAEAVMNRGELV) form an NMP region. Residues Thr-33, Arg-38, 59–61 (ELV), 85–88 (GFPR), and Gln-92 each bind AMP. The tract at residues 126–132 (ARGRADD) is LID. Arg-127 provides a ligand contact to ATP. AMP-binding residues include Arg-129 and Arg-140. Gly-168 serves as a coordination point for ATP.

Belongs to the adenylate kinase family. As to quaternary structure, monomer.

It is found in the cytoplasm. The enzyme catalyses AMP + ATP = 2 ADP. The protein operates within purine metabolism; AMP biosynthesis via salvage pathway; AMP from ADP: step 1/1. Functionally, catalyzes the reversible transfer of the terminal phosphate group between ATP and AMP. Plays an important role in cellular energy homeostasis and in adenine nucleotide metabolism. This Synechococcus sp. (strain RCC307) protein is Adenylate kinase.